A 615-amino-acid polypeptide reads, in one-letter code: 1-deoxy-D-xylulose-5-phosphate synthase (615 aa).

Residues His72 and 113–115 (GHA) contribute to the thiamine diphosphate site. Position 144 (Asp144) interacts with Mg(2+). Thiamine diphosphate-binding positions include 145–146 (GA), Asn173, Tyr281, and Glu360. Asn173 serves as a coordination point for Mg(2+).

This sequence belongs to the transketolase family. DXPS subfamily. In terms of assembly, homodimer. Requires Mg(2+) as cofactor. The cofactor is thiamine diphosphate.

The catalysed reaction is D-glyceraldehyde 3-phosphate + pyruvate + H(+) = 1-deoxy-D-xylulose 5-phosphate + CO2. Its pathway is metabolic intermediate biosynthesis; 1-deoxy-D-xylulose 5-phosphate biosynthesis; 1-deoxy-D-xylulose 5-phosphate from D-glyceraldehyde 3-phosphate and pyruvate: step 1/1. Its function is as follows. Catalyzes the acyloin condensation reaction between C atoms 2 and 3 of pyruvate and glyceraldehyde 3-phosphate to yield 1-deoxy-D-xylulose-5-phosphate (DXP). The chain is 1-deoxy-D-xylulose-5-phosphate synthase from Thermus thermophilus (strain ATCC 27634 / DSM 579 / HB8).